The primary structure comprises 388 residues: uncharacterized protein (388 aa).

The next 8 membrane-spanning stretches (helical) occupy residues 15–37, 97–119, 129–151, 158–175, 179–196, 203–225, 304–326, and 347–369; these read VISA…LLVL, GFSK…VVFY, PIWG…TFLL, FIYI…FLSA, MMLA…VLFK, LAFW…YLSQ, IFIV…YIYF, and LLSV…DALL.

The protein localises to the cell membrane. This is an uncharacterized protein from Aquifex aeolicus (strain VF5).